Reading from the N-terminus, the 450-residue chain is Tol-Pal system protein TolB (450 aa).

The N-terminal stretch at 1–37 (MIERNGLQRMPFRLNRRHMISGMASAAVLLGSRQALG) is a signal peptide.

The protein belongs to the TolB family. The Tol-Pal system is composed of five core proteins: the inner membrane proteins TolA, TolQ and TolR, the periplasmic protein TolB and the outer membrane protein Pal. They form a network linking the inner and outer membranes and the peptidoglycan layer.

It is found in the periplasm. In terms of biological role, part of the Tol-Pal system, which plays a role in outer membrane invagination during cell division and is important for maintaining outer membrane integrity. The sequence is that of Tol-Pal system protein TolB from Nitrobacter winogradskyi (strain ATCC 25391 / DSM 10237 / CIP 104748 / NCIMB 11846 / Nb-255).